Consider the following 442-residue polypeptide: MGDSGKLEATIDRLLNEEKQMRLAENVAGTRKAATEILQLCFDAKDWKLLNEQILNLSKKRGQLKQAVQSMVQQAMQYIDQTPDIETRIELIKTLNNVSAGKIYVEIERARLTKKLAKIKEEQGQIAEAADLMQEVAVETFGAMAKTEKIAFILEQVRLCLDRQDFVRAQILSRKINPRVFDADTKKDKKKPKEGDNMVEEAPADIPTLLELKRIYYELMIRYYSHNNEYIEICRSYKAIYDIPSVKETPEQWIPVLRKICWFLVLAPHDPMQSSLLNATLEDKNLSEIPDFKMLLKQVVTMEVIQWTSLWNKYKDEFEKEKSMIGGSLGDKAGEDLKLRIIEHNILVVSKYYARITLKRLAELLCLSMEEAEKHLSEMVVSKALIAKIDRPSGIVCFQIAKDSNEILNSWAGNLEKLLDLVEKSCHQIHKETMVHKAALRP.

Residues 6–137 (KLEATIDRLL…EAADLMQEVA (132 aa)) adopt a coiled-coil conformation. Residues 232 to 403 (EICRSYKAIY…GIVCFQIAKD (172 aa)) enclose the PCI domain.

Belongs to the proteasome subunit p55 family. As to quaternary structure, component of the 19S regulatory particle (RP/PA700) lid subcomplex of the 26S proteasome. The 26S proteasome is composed of a core protease (CP), known as the 20S proteasome, capped at one or both ends by the 19S regulatory particle (RP/PA700). The RP/PA700 complex is composed of at least 17 different subunits in two subcomplexes, the base and the lid, which form the portions proximal and distal to the 20S proteolytic core, respectively. As to expression, ubiquitous with highest expression in flowers.

The protein localises to the cytoplasm. It localises to the nucleus. Acts as a regulatory subunit of the 26 proteasome which is involved in the ATP-dependent degradation of ubiquitinated proteins. Required for gametogenesis and sporophyte development. Acts redundantly with RPN5B. In Arabidopsis thaliana (Mouse-ear cress), this protein is 26S proteasome non-ATPase regulatory subunit 12 homolog A (RPN5A).